Here is a 757-residue protein sequence, read N- to C-terminus: Endonuclease MutS2 (757 aa).

Residue 321-328 (GPNMGGKT) coordinates ATP. Positions 681–756 (IDIRGMTVEE…GTGVTVVEVE (76 aa)) constitute a Smr domain.

The protein belongs to the DNA mismatch repair MutS family. MutS2 subfamily. In terms of assembly, homodimer. Binds to stalled ribosomes, contacting rRNA.

In terms of biological role, endonuclease that is involved in the suppression of homologous recombination and thus may have a key role in the control of bacterial genetic diversity. Acts as a ribosome collision sensor, splitting the ribosome into its 2 subunits. Detects stalled/collided 70S ribosomes which it binds and splits by an ATP-hydrolysis driven conformational change. Acts upstream of the ribosome quality control system (RQC), a ribosome-associated complex that mediates the extraction of incompletely synthesized nascent chains from stalled ribosomes and their subsequent degradation. Probably generates substrates for RQC. The protein is Endonuclease MutS2 of Thermotoga neapolitana (strain ATCC 49049 / DSM 4359 / NBRC 107923 / NS-E).